The chain runs to 735 residues: Photosystem I P700 chlorophyll a apoprotein A2 (735 aa).

Helical transmembrane passes span 47 to 70, 136 to 159, 176 to 200, 274 to 292, 331 to 354, 370 to 396, 418 to 440, and 518 to 536; these read IFAS…FHVA, LYVG…LHLQ, LNHH…HVAI, MAHH…GHMY, LHFQ…QHMY, AALY…IFWI, AIIS…LYVH, and FLVH…LILV. C560 and C569 together coordinate [4Fe-4S] cluster. Helical transmembrane passes span 576–597 and 644–666; these read AFYL…YWHW and LSVW…MFLI. Chlorophyll a-binding residues include H655, M663, and Y671. Residue W672 coordinates phylloquinone. The chain crosses the membrane as a helical span at residues 708–728; the sequence is LVGLAHFSVGYVFTYAAFVIA.

Belongs to the PsaA/PsaB family. The PsaA/B heterodimer binds the P700 chlorophyll special pair and subsequent electron acceptors. PSI consists of a core antenna complex that captures photons, and an electron transfer chain that converts photonic excitation into a charge separation. The eukaryotic PSI reaction center is composed of at least 11 subunits. P700 is a chlorophyll a/chlorophyll a' dimer, A0 is one or more chlorophyll a, A1 is one or both phylloquinones and FX is a shared 4Fe-4S iron-sulfur center. serves as cofactor.

It localises to the plastid. Its subcellular location is the chloroplast thylakoid membrane. It catalyses the reaction reduced [plastocyanin] + hnu + oxidized [2Fe-2S]-[ferredoxin] = oxidized [plastocyanin] + reduced [2Fe-2S]-[ferredoxin]. Its function is as follows. PsaA and PsaB bind P700, the primary electron donor of photosystem I (PSI), as well as the electron acceptors A0, A1 and FX. PSI is a plastocyanin/cytochrome c6-ferredoxin oxidoreductase, converting photonic excitation into a charge separation, which transfers an electron from the donor P700 chlorophyll pair to the spectroscopically characterized acceptors A0, A1, FX, FA and FB in turn. Oxidized P700 is reduced on the lumenal side of the thylakoid membrane by plastocyanin or cytochrome c6. This chain is Photosystem I P700 chlorophyll a apoprotein A2, found in Tetradesmus obliquus (Green alga).